Reading from the N-terminus, the 189-residue chain is Testis-expressed protein 22 (189 aa).

The interval 1–120 is disordered; it reads MDSRQQRPQR…TQSVPTPPLQ (120 aa). Over residues 14-24 the composition is skewed to low complexity; the sequence is QWQLAQEQRQQ. Basic and acidic residues predominate over residues 70 to 87; sequence IDERRRLALQRMQERTDT. The span at 103-114 shows a compositional bias: low complexity; sequence QQTETSPSTQSV.

As to expression, mainly expressed in spermatocytes and spermatids in testis.

It is found in the cytoplasm. It localises to the cytoplasmic vesicle. Its subcellular location is the secretory vesicle. The protein resides in the acrosome. In Mus musculus (Mouse), this protein is Testis-expressed protein 22 (Tex22).